Consider the following 379-residue polypeptide: Succinyl-diaminopimelate desuccinylase (379 aa).

H70 contacts Zn(2+). The active site involves D72. Residue D103 participates in Zn(2+) binding. Residue E137 is the Proton acceptor of the active site. Residues E138, E166, and H352 each contribute to the Zn(2+) site.

Belongs to the peptidase M20A family. DapE subfamily. Homodimer. It depends on Zn(2+) as a cofactor. The cofactor is Co(2+).

The enzyme catalyses N-succinyl-(2S,6S)-2,6-diaminopimelate + H2O = (2S,6S)-2,6-diaminopimelate + succinate. It participates in amino-acid biosynthesis; L-lysine biosynthesis via DAP pathway; LL-2,6-diaminopimelate from (S)-tetrahydrodipicolinate (succinylase route): step 3/3. In terms of biological role, catalyzes the hydrolysis of N-succinyl-L,L-diaminopimelic acid (SDAP), forming succinate and LL-2,6-diaminopimelate (DAP), an intermediate involved in the bacterial biosynthesis of lysine and meso-diaminopimelic acid, an essential component of bacterial cell walls. The protein is Succinyl-diaminopimelate desuccinylase of Burkholderia pseudomallei (strain 1106a).